We begin with the raw amino-acid sequence, 475 residues long: Ribulose bisphosphate carboxylase large chain (475 aa).

Positions 1-2 are excised as a propeptide; that stretch reads MS. Pro3 carries the N-acetylproline modification. At Lys14 the chain carries N6,N6,N6-trimethyllysine. Substrate is bound by residues Asn123 and Thr173. The active-site Proton acceptor is Lys175. Lys177 serves as a coordination point for substrate. Positions 201, 203, and 204 each coordinate Mg(2+). The residue at position 201 (Lys201) is an N6-carboxylysine. Residue His294 is the Proton acceptor of the active site. Arg295, His327, and Ser379 together coordinate substrate.

Belongs to the RuBisCO large chain family. Type I subfamily. As to quaternary structure, heterohexadecamer of 8 large chains and 8 small chains; disulfide-linked. The disulfide link is formed within the large subunit homodimers. The cofactor is Mg(2+). In terms of processing, the disulfide bond which can form in the large chain dimeric partners within the hexadecamer appears to be associated with oxidative stress and protein turnover.

It localises to the plastid. The protein localises to the chloroplast. The catalysed reaction is 2 (2R)-3-phosphoglycerate + 2 H(+) = D-ribulose 1,5-bisphosphate + CO2 + H2O. It carries out the reaction D-ribulose 1,5-bisphosphate + O2 = 2-phosphoglycolate + (2R)-3-phosphoglycerate + 2 H(+). Functionally, ruBisCO catalyzes two reactions: the carboxylation of D-ribulose 1,5-bisphosphate, the primary event in carbon dioxide fixation, as well as the oxidative fragmentation of the pentose substrate in the photorespiration process. Both reactions occur simultaneously and in competition at the same active site. The chain is Ribulose bisphosphate carboxylase large chain from Oenothera argillicola (Appalachian evening primrose).